A 285-amino-acid polypeptide reads, in one-letter code: Shikimate dehydrogenase (NADP(+)) (285 aa).

Shikimate is bound by residues 22-24 (SMS) and T69. K73 acts as the Proton acceptor in catalysis. Residue D85 participates in NADP(+) binding. Residues N94 and D110 each contribute to the shikimate site. NADP(+) contacts are provided by residues 136-140 (GAGGA), 160-165 (NRTVAR), and M225. Shikimate is bound at residue Y227. G248 lines the NADP(+) pocket.

Belongs to the shikimate dehydrogenase family. Homodimer.

The enzyme catalyses shikimate + NADP(+) = 3-dehydroshikimate + NADPH + H(+). Its pathway is metabolic intermediate biosynthesis; chorismate biosynthesis; chorismate from D-erythrose 4-phosphate and phosphoenolpyruvate: step 4/7. Functionally, involved in the biosynthesis of the chorismate, which leads to the biosynthesis of aromatic amino acids. Catalyzes the reversible NADPH linked reduction of 3-dehydroshikimate (DHSA) to yield shikimate (SA). This chain is Shikimate dehydrogenase (NADP(+)), found in Caulobacter vibrioides (strain ATCC 19089 / CIP 103742 / CB 15) (Caulobacter crescentus).